Reading from the N-terminus, the 580-residue chain is Acyl-coenzyme A synthetase ACSM3, mitochondrial (580 aa).

The transit peptide at 1–21 (MVMLLRARCFQRLAIPDPMRV) directs the protein to the mitochondrion. 2 positions are modified to N6-succinyllysine: Lys-67 and Lys-100. Position 151 is an N6-acetyllysine (Lys-151). Residues 229 to 237 (TSGTTGPPK), 368 to 373 (EGYGQT), Asp-455, Arg-470, and Lys-566 contribute to the ATP site.

It belongs to the ATP-dependent AMP-binding enzyme family. Requires Mg(2+) as cofactor. Mn(2+) serves as cofactor. In terms of tissue distribution, detected in kidney (at protein level). Detected in kidney proximal tubules and in liver. Detected at low levels in testis, stomach, heart and lung.

The protein localises to the mitochondrion. It localises to the mitochondrion matrix. The enzyme catalyses a medium-chain fatty acid + ATP + CoA = a medium-chain fatty acyl-CoA + AMP + diphosphate. It catalyses the reaction propanoate + ATP + CoA = propanoyl-CoA + AMP + diphosphate. It carries out the reaction butanoate + ATP + CoA = butanoyl-CoA + AMP + diphosphate. The catalysed reaction is 2-methylpropanoate + ATP + CoA = 2-methylpropanoyl-CoA + AMP + diphosphate. The enzyme catalyses 2-methylbutanoate + ATP + CoA = 2-methylbutanoyl-CoA + AMP + diphosphate. It catalyses the reaction octanoate + ATP + CoA = octanoyl-CoA + AMP + diphosphate. Functionally, catalyzes the activation of fatty acids by CoA to produce an acyl-CoA, the first step in fatty acid metabolism. Capable of activating medium-chain fatty acids with a preference for isobutyrate among fatty acids with 2-6 carbon atoms. This Mus musculus (Mouse) protein is Acyl-coenzyme A synthetase ACSM3, mitochondrial (Acsm3).